A 150-amino-acid chain; its full sequence is Large ribosomal subunit protein bL9 (150 aa).

It belongs to the bacterial ribosomal protein bL9 family.

In terms of biological role, binds to the 23S rRNA. The chain is Large ribosomal subunit protein bL9 from Neisseria meningitidis serogroup B (strain ATCC BAA-335 / MC58).